The following is a 143-amino-acid chain: Sperm mitochondrial-associated cysteine-rich protein (143 aa).

A phosphoserine mark is found at Ser-37, Ser-44, and Ser-110. The tract at residues 101-143 (CCSSENKTESDSDTSGQTLEKGSQSPQSPPGAQGNWNQKKSNK) is disordered. Residues 113-126 (DTSGQTLEKGSQSP) are compositionally biased toward polar residues. Ser-128 bears the Phosphoserine mark. A compositionally biased stretch (polar residues) spans 134 to 143 (GNWNQKKSNK).

As to expression, testis. Is selectively expressed in the spermatids of seminiferous tubules.

Its subcellular location is the cytoplasm. The protein localises to the mitochondrion membrane. Involved in sperm motility. Its absence is associated with genetic background dependent male infertility. Infertility may be due to reduced sperm motility in the female reproductive tract and inability to penetrate the oocyte zona pellucida. The polypeptide is Sperm mitochondrial-associated cysteine-rich protein (Smcp) (Mus musculus (Mouse)).